A 299-amino-acid chain; its full sequence is CCR4-NOT transcription complex subunit 9 (299 aa).

The protein belongs to the CNOT9 family. As to quaternary structure, homodimer. Component of the CCR4-NOT complex.

It is found in the nucleus. The protein resides in the cytoplasm. The protein localises to the P-body. Its function is as follows. Component of the CCR4-NOT complex which is one of the major cellular mRNA deadenylases and is linked to various cellular processes including bulk mRNA degradation, miRNA-mediated repression, translational repression during translational initiation and general transcription regulation. Additional complex functions may be a consequence of its influence on mRNA expression. Involved in down-regulation of MYB- and JUN-dependent transcription. Enhances ligand-dependent transcriptional activity of nuclear hormone receptors. May play a role in cell differentiation. The sequence is that of CCR4-NOT transcription complex subunit 9 from Xenopus tropicalis (Western clawed frog).